The primary structure comprises 194 residues: Adenylate kinase (194 aa).

8–16 contributes to the ATP binding site; sequence GIPGVGKST.

Belongs to the archaeal adenylate kinase family. As to quaternary structure, homotrimer.

The protein resides in the cytoplasm. It carries out the reaction AMP + ATP = 2 ADP. In Sulfolobus acidocaldarius (strain ATCC 33909 / DSM 639 / JCM 8929 / NBRC 15157 / NCIMB 11770), this protein is Adenylate kinase (adkA).